The chain runs to 670 residues: Sodium/glucose cotransporter 2 (670 aa).

Topologically, residues 1 to 20 are extracellular; it reads MEGHVEEGSELGEQKVLIDN. Residues 21–42 traverse the membrane as a helical segment; the sequence is PADILVIAAYFLLVIGVGLWSM. Residues 43-61 are Cytoplasmic-facing; the sequence is FRTNRGTVGGYFLAGRSMV. The helical transmembrane segment at 62 to 83 threads the bilayer; that stretch reads WWPVGASLFASNIGSGHFVGLA. 2 residues coordinate Na(+): Ala71 and Ile74. The Extracellular segment spans residues 84-91; it reads GTGAASGL. Residues 92-112 traverse the membrane as a helical segment; sequence AVAGFEWNALFVVLLLGWLFV. The Cytoplasmic segment spans residues 113–134; sequence PVYLTAGVITMPQYLRKRFGGR. A helical membrane pass occupies residues 135–164; sequence RIRLYLSVLSLFLYIFTKISVDMFSGAVFI. At 165–171 the chain is on the extracellular side; that stretch reads QQALGWN. A run of 2 helical transmembrane segments spans residues 172-193 and 194-215; these read IYAS…GGLA and ALMY…ILTG. Residues 216–273 are Extracellular-facing; that stretch reads YAFHEVGGYSGLFDKYLGAVTSLTVSKDPAVGNISSTCYQPRPDSYHLLRDPVTGGLP. The N-linked (GlcNAc...) asparagine glycan is linked to Asn248. Intrachain disulfides connect Cys253–Cys509, Cys343–Cys349, Cys353–Cys359, and Cys515–Cys520. A helical transmembrane segment spans residues 274–293; that stretch reads WPALLLGLTIVSGWHWCSDQ. Residues 294–307 lie on the Cytoplasmic side of the membrane; sequence VIVQRCLAGKNLTH. A helical transmembrane segment spans residues 308 to 329; the sequence is IKAGCILCGYLKLMPMFLMVMP. At 330 to 373 the chain is on the extracellular side; it reads GMISRILYPDEVACVVPEVCKRVCGTEVGCSNIAYPRLVVKLMP. A helical transmembrane segment spans residues 374–404; the sequence is NGLRGLMLAVMLAALMSSLASIFNSSSTLFT. 3 residues coordinate Na(+): Ala387, Ser390, and Ser391. Over 405–422 the chain is Cytoplasmic; sequence MDIYTRLRPRAGDRELLL. A helical transmembrane segment spans residues 423–444; the sequence is VGRLWVVFIVAVSVAWLPVVQA. At 445–449 the chain is on the extracellular side; it reads AQGGQ. Residues 450–475 traverse the membrane as a helical segment; that stretch reads LFDYIQSVSSYLAPPVSAVFVLALFV. The Cytoplasmic segment spans residues 476-480; the sequence is PRVNE. Residues 481–503 traverse the membrane as a helical segment; that stretch reads KGAFWGLIGGLLMGLARLIPEFF. The Extracellular segment spans residues 504-521; sequence FGTGSCVRPSACPAIFCR. Residues 522-545 form a helical membrane-spanning segment; it reads VHYLYFAIILFFCSGFLTLAISRC. The Cytoplasmic segment spans residues 546–649; the sequence is TAPIPQKHLH…DISEDPSWAR (104 aa). A helical membrane pass occupies residues 650–668; sequence VVNLNALLMMTVAVFLWGF. Topologically, residues 669 to 670 are extracellular; the sequence is YA.

It belongs to the sodium:solute symporter (SSF) (TC 2.A.21) family. As to quaternary structure, forms a heterodimer (via TM13) with PDZK1IP1 (via N-terminal transmembrane helix); this interaction enhances SLC5A2 transporter activity. In terms of processing, glycosylated at a single site. Kidney, in proximal tubule S1 segments.

It localises to the apical cell membrane. The catalysed reaction is D-glucose(out) + Na(+)(out) = D-glucose(in) + Na(+)(in). With respect to regulation, enhanced by the interaction with PDZK1IP1/MAP17. Electrogenic Na(+)-coupled sugar symporter that actively transports D-glucose at the plasma membrane, with a Na(+) to sugar coupling ratio of 1:1. Transporter activity is driven by a transmembrane Na(+) electrochemical gradient set by the Na(+)/K(+) pump. Unlike SLC5A1/SGLT1, requires the auxiliary protein PDZK1IP1/MAP17 for full transporter activity. Has a primary role in D-glucose reabsorption from glomerular filtrate across the brush border of the early proximal tubules of the kidney. The protein is Sodium/glucose cotransporter 2 (Slc5a2) of Rattus norvegicus (Rat).